The following is a 530-amino-acid chain: BTB/POZ domain-containing protein 3 (530 aa).

The tract at residues 23–48 (KNRSKKGSKKANSSGGGGGGGSVGSG) is disordered. A compositionally biased stretch (gly residues) spans 36 to 46 (SGGGGGGGSVG). The region spanning 128 to 198 (ADVHFVVGPP…IYCDEIDLAA (71 aa)) is the BTB domain. The BACK domain occupies 243–308 (FEEPDLTQRC…NWAEVECQRQ (66 aa)).

In the somatosensory cortex, specifically expressed in spiny stellate neurons during barrel formation. Also expressed in the olfactory bulb, piriform cortex and hippocampus.

The protein resides in the cytoplasm. Its subcellular location is the cytosol. The protein localises to the nucleus. In terms of biological role, acts as a key regulator of dendritic field orientation during development of sensory cortex. Also directs dendrites toward active axon terminals when ectopically expressed. The chain is BTB/POZ domain-containing protein 3 (Btbd3) from Mus musculus (Mouse).